The following is a 436-amino-acid chain: Glutamate-1-semialdehyde 2,1-aminomutase (436 aa).

The residue at position 276 (Lys276) is an N6-(pyridoxal phosphate)lysine.

This sequence belongs to the class-III pyridoxal-phosphate-dependent aminotransferase family. HemL subfamily. As to quaternary structure, homodimer. Pyridoxal 5'-phosphate serves as cofactor.

It is found in the cytoplasm. It carries out the reaction (S)-4-amino-5-oxopentanoate = 5-aminolevulinate. It functions in the pathway porphyrin-containing compound metabolism; protoporphyrin-IX biosynthesis; 5-aminolevulinate from L-glutamyl-tRNA(Glu): step 2/2. Its pathway is porphyrin-containing compound metabolism; chlorophyll biosynthesis. This Synechococcus sp. (strain JA-2-3B'a(2-13)) (Cyanobacteria bacterium Yellowstone B-Prime) protein is Glutamate-1-semialdehyde 2,1-aminomutase.